The following is a 206-amino-acid chain: Small ribosomal subunit protein uS3 (206 aa).

One can recognise a KH type-2 domain in the interval isoleucine 39–lysine 107.

It belongs to the universal ribosomal protein uS3 family. As to quaternary structure, part of the 30S ribosomal subunit. Forms a tight complex with proteins S10 and S14.

In terms of biological role, binds the lower part of the 30S subunit head. Binds mRNA in the 70S ribosome, positioning it for translation. The protein is Small ribosomal subunit protein uS3 of Wolbachia sp. subsp. Brugia malayi (strain TRS).